The primary structure comprises 555 residues: Dihydroxy-acid dehydratase (555 aa).

Asp78 lines the Mg(2+) pocket. Cys119 contacts [2Fe-2S] cluster. Asp120 and Lys121 together coordinate Mg(2+). At Lys121 the chain carries N6-carboxylysine. Cys195 is a binding site for [2Fe-2S] cluster. Glu444 contributes to the Mg(2+) binding site. The active-site Proton acceptor is Ser470.

The protein belongs to the IlvD/Edd family. Homodimer. The cofactor is [2Fe-2S] cluster. Mg(2+) serves as cofactor.

The catalysed reaction is (2R)-2,3-dihydroxy-3-methylbutanoate = 3-methyl-2-oxobutanoate + H2O. The enzyme catalyses (2R,3R)-2,3-dihydroxy-3-methylpentanoate = (S)-3-methyl-2-oxopentanoate + H2O. It participates in amino-acid biosynthesis; L-isoleucine biosynthesis; L-isoleucine from 2-oxobutanoate: step 3/4. The protein operates within amino-acid biosynthesis; L-valine biosynthesis; L-valine from pyruvate: step 3/4. In terms of biological role, functions in the biosynthesis of branched-chain amino acids. Catalyzes the dehydration of (2R,3R)-2,3-dihydroxy-3-methylpentanoate (2,3-dihydroxy-3-methylvalerate) into 2-oxo-3-methylpentanoate (2-oxo-3-methylvalerate) and of (2R)-2,3-dihydroxy-3-methylbutanoate (2,3-dihydroxyisovalerate) into 2-oxo-3-methylbutanoate (2-oxoisovalerate), the penultimate precursor to L-isoleucine and L-valine, respectively. This Dehalococcoides mccartyi (strain CBDB1) protein is Dihydroxy-acid dehydratase.